Here is a 283-residue protein sequence, read N- to C-terminus: Gap junction alpha-6 protein (283 aa).

Over 1–23 (MSDWSALHQLLEKVQPYSTAGGK) the chain is Cytoplasmic. A helical membrane pass occupies residues 24 to 41 (VWIKVLFIFRILLLGTAI). At 42–76 (ESAWSDEQFEFHCNTQQPGCENVCYDHAFPISHVR) the chain is on the extracellular side. Residues 77–99 (LWVLQVIFVSVPILLYLAHVYYV) form a helical membrane-spanning segment. Topologically, residues 100 to 150 (VRQNKKLNKQEEELEAAHFNEASVERHLETIAGEQFKCGSEEQSKVKMRGR) are cytoplasmic. Residues 151–173 (LLLTYMASIFFKSVFEMAFLLIQ) traverse the membrane as a helical segment. Residues 174–208 (WYIYGFTLSALYICEQSPCPRRVDCFLSRPTEKTI) lie on the Extracellular side of the membrane. A helical membrane pass occupies residues 209-231 (FILFMFVVSVVSFVLDIIELFYV). The Cytoplasmic portion of the chain corresponds to 232-283 (LFKAIKNRMRKAEDEVYCDELPCPSHVSSSTVLTTIDSSEQAVPVELSSVCI).

The protein belongs to the connexin family. Alpha-type (group II) subfamily. In terms of assembly, a connexon is composed of a hexamer of connexins.

The protein localises to the cell membrane. The protein resides in the cell junction. It localises to the gap junction. Functionally, one gap junction consists of a cluster of closely packed pairs of transmembrane channels, the connexons, through which materials of low MW diffuse from one cell to a neighboring cell. This is Gap junction alpha-6 protein (Gja6) from Mus musculus (Mouse).